A 600-amino-acid polypeptide reads, in one-letter code: NADH-quinone oxidoreductase subunit C/D (600 aa).

Residues 1 to 190 (MVNNMTDLTA…DPFELTKAKQ (190 aa)) are NADH dehydrogenase I subunit C. The interval 214-600 (DFMFLNLGPN…IDFVMSDVDR (387 aa)) is NADH dehydrogenase I subunit D.

This sequence in the N-terminal section; belongs to the complex I 30 kDa subunit family. It in the C-terminal section; belongs to the complex I 49 kDa subunit family. In terms of assembly, NDH-1 is composed of 13 different subunits. Subunits NuoB, CD, E, F, and G constitute the peripheral sector of the complex.

It is found in the cell inner membrane. It carries out the reaction a quinone + NADH + 5 H(+)(in) = a quinol + NAD(+) + 4 H(+)(out). Its function is as follows. NDH-1 shuttles electrons from NADH, via FMN and iron-sulfur (Fe-S) centers, to quinones in the respiratory chain. The immediate electron acceptor for the enzyme in this species is believed to be ubiquinone. Couples the redox reaction to proton translocation (for every two electrons transferred, four hydrogen ions are translocated across the cytoplasmic membrane), and thus conserves the redox energy in a proton gradient. The polypeptide is NADH-quinone oxidoreductase subunit C/D (Salmonella paratyphi C (strain RKS4594)).